Consider the following 250-residue polypeptide: Adenosylcobinamide-GDP ribazoletransferase (250 aa).

The next 6 membrane-spanning stretches (helical) occupy residues 32–52, 59–79, 113–133, 136–156, 185–205, and 230–250; these read KGII…MVAY, LAHS…TGGL, GVLA…GLGE, IYWG…YGCY, LTFI…LLPI, and CELT…AGLF.

The protein belongs to the CobS family. The cofactor is Mg(2+).

It localises to the cell membrane. The enzyme catalyses alpha-ribazole + adenosylcob(III)inamide-GDP = adenosylcob(III)alamin + GMP + H(+). It catalyses the reaction alpha-ribazole 5'-phosphate + adenosylcob(III)inamide-GDP = adenosylcob(III)alamin 5'-phosphate + GMP + H(+). Its pathway is cofactor biosynthesis; adenosylcobalamin biosynthesis; adenosylcobalamin from cob(II)yrinate a,c-diamide: step 7/7. Joins adenosylcobinamide-GDP and alpha-ribazole to generate adenosylcobalamin (Ado-cobalamin). Also synthesizes adenosylcobalamin 5'-phosphate from adenosylcobinamide-GDP and alpha-ribazole 5'-phosphate. In Alkaliphilus metalliredigens (strain QYMF), this protein is Adenosylcobinamide-GDP ribazoletransferase.